The following is a 297-amino-acid chain: Nucleotide-binding protein Bsph_0448 (297 aa).

An ATP-binding site is contributed by 19–26 (GMSGAGKT). 70 to 73 (DMRG) provides a ligand contact to GTP.

It belongs to the RapZ-like family.

In terms of biological role, displays ATPase and GTPase activities. The sequence is that of Nucleotide-binding protein Bsph_0448 from Lysinibacillus sphaericus (strain C3-41).